The following is a 309-amino-acid chain: RHOMBOID-like protein 5 (309 aa).

A run of 7 helical transmembrane segments spans residues 27-47 (IPVP…FVTF), 113-133 (IWLH…MCIG), 140-160 (FGFM…SLVS), 170-190 (VSVG…SELI), 200-220 (CTAL…GFLP), 222-242 (VDNS…FVLL), and 274-294 (IFRF…YTKL). Serine 175 serves as the catalytic Nucleophile. Histidine 227 acts as the Charge relay system in catalysis.

The protein belongs to the peptidase S54 family.

Its subcellular location is the membrane. It catalyses the reaction Cleaves type-1 transmembrane domains using a catalytic dyad composed of serine and histidine that are contributed by different transmembrane domains.. Functionally, probable rhomboid-type serine protease that catalyzes intramembrane proteolysis. May function in reproductive organs maturation. The sequence is that of RHOMBOID-like protein 5 from Arabidopsis thaliana (Mouse-ear cress).